Reading from the N-terminus, the 183-residue chain is Intermembrane phospholipid transport system binding protein MlaD (183 aa).

At 1–7 (MQTKKNE) the chain is on the cytoplasmic side. The helical; Signal-anchor for type II membrane protein transmembrane segment at 8–28 (IWVGIFLLAALLAALFVCLKA) threads the bilayer. The Periplasmic portion of the chain corresponds to 29-183 (ANVTSIRTEP…ETTEPVGTTK (155 aa)). Residues 39 to 116 (TYTLYATFDN…LGEQYLALNV (78 aa)) are MCE/MlaD. The interval 155 to 183 (KGDDNKNSGDAPAAAPGNNETTEPVGTTK) is disordered. Polar residues predominate over residues 172-183 (NNETTEPVGTTK).

It belongs to the MlaD family. As to quaternary structure, the complex is composed of two ATP-binding proteins (MlaF), two transmembrane proteins (MlaE), two cytoplasmic solute-binding proteins (MlaB) and six periplasmic solute-binding proteins (MlaD).

It localises to the cell inner membrane. Its function is as follows. Part of the ABC transporter complex MlaFEDB, which is involved in a phospholipid transport pathway that maintains lipid asymmetry in the outer membrane by retrograde trafficking of phospholipids from the outer membrane to the inner membrane. MlaD functions in substrate binding with strong affinity for phospholipids and modulates ATP hydrolytic activity of the complex. The sequence is that of Intermembrane phospholipid transport system binding protein MlaD from Escherichia coli O157:H7.